The primary structure comprises 549 residues: mRNA-capping enzyme subunit beta (549 aa).

Residue Ser2 is modified to N-acetylserine. Ser15 is modified (phosphoserine). The interval 30–169 (LQKLSEAANG…QGNEGNIASN (140 aa)) is disordered. Acidic residues predominate over residues 86-96 (DDEETDTDDEM). Ser124 carries the phosphoserine modification. The span at 135–157 (AKLEKPSDDSIHQNSKSDEEQRI) shows a compositional bias: basic and acidic residues. The N6-GMP-lysine intermediate role is filled by Lys223.

This sequence belongs to the fungal TPase family. Heterodimer. The mRNA-capping enzyme is composed of two separate chains alpha and beta, respectively a mRNA guanylyltransferase and an mRNA 5'-triphosphate monophosphatase. It depends on Mg(2+) as a cofactor.

Its subcellular location is the nucleus. It carries out the reaction a 5'-end triphospho-ribonucleoside in mRNA + H2O = a 5'-end diphospho-ribonucleoside in mRNA + phosphate + H(+). First step of mRNA capping. Converts the 5'-triphosphate end of a nascent mRNA chain into a diphosphate end. This chain is mRNA-capping enzyme subunit beta (CET1), found in Saccharomyces cerevisiae (strain ATCC 204508 / S288c) (Baker's yeast).